The following is a 393-amino-acid chain: NAD(P)H-quinone oxidoreductase subunit H, chloroplastic (393 aa).

Belongs to the complex I 49 kDa subunit family. As to quaternary structure, NDH is composed of at least 16 different subunits, 5 of which are encoded in the nucleus.

The protein localises to the plastid. Its subcellular location is the chloroplast thylakoid membrane. It catalyses the reaction a plastoquinone + NADH + (n+1) H(+)(in) = a plastoquinol + NAD(+) + n H(+)(out). It carries out the reaction a plastoquinone + NADPH + (n+1) H(+)(in) = a plastoquinol + NADP(+) + n H(+)(out). Functionally, NDH shuttles electrons from NAD(P)H:plastoquinone, via FMN and iron-sulfur (Fe-S) centers, to quinones in the photosynthetic chain and possibly in a chloroplast respiratory chain. The immediate electron acceptor for the enzyme in this species is believed to be plastoquinone. Couples the redox reaction to proton translocation, and thus conserves the redox energy in a proton gradient. The polypeptide is NAD(P)H-quinone oxidoreductase subunit H, chloroplastic (Lepidium virginicum (Virginia pepperweed)).